The primary structure comprises 1380 residues: DNA-directed RNA polymerase subunit beta (1380 aa).

It belongs to the RNA polymerase beta chain family. In terms of assembly, the RNAP catalytic core consists of 2 alpha, 1 beta, 1 beta' and 1 omega subunit. When a sigma factor is associated with the core the holoenzyme is formed, which can initiate transcription.

The enzyme catalyses RNA(n) + a ribonucleoside 5'-triphosphate = RNA(n+1) + diphosphate. In terms of biological role, DNA-dependent RNA polymerase catalyzes the transcription of DNA into RNA using the four ribonucleoside triphosphates as substrates. In Sinorhizobium medicae (strain WSM419) (Ensifer medicae), this protein is DNA-directed RNA polymerase subunit beta.